The chain runs to 656 residues: Heat shock 70 kDa protein, mitochondrial (656 aa).

Residues 1–23 constitute a mitochondrion transit peptide; sequence MFARRLRGAGSLAAASLARWQSS. The segment at 624 to 656 is disordered; it reads EYQQAAAGNSSSSSGNTDSSQGEQQQQGDQQKQ. A compositionally biased stretch (low complexity) spans 626–656; the sequence is QQAAAGNSSSSSGNTDSSQGEQQQQGDQQKQ.

It belongs to the heat shock protein 70 family.

The protein localises to the mitochondrion matrix. The protein resides in the kinetoplast. Functionally, may participate in eukaryotic mitochondrial DNA replication. The chain is Heat shock 70 kDa protein, mitochondrial (MTP70) from Trypanosoma cruzi.